Consider the following 854-residue polypeptide: Fibroblast growth factor receptor 1 (854 aa).

Residues 1 to 20 (MSGLFFLLSELLILLGKINS) form the signal peptide. Over 21–383 (VSKKSLCHPE…NFFMNSVPLS (363 aa)) the chain is Extracellular. In terms of domain architecture, Ig-like C2-type 1 spans 29-120 (PELFKIDNKL…SSVFFLINVT (92 aa)). Cysteine 50 and cysteine 102 form a disulfide bridge. 11 N-linked (GlcNAc...) asparagine glycosylation sites follow: asparagine 95, asparagine 99, asparagine 110, asparagine 118, asparagine 140, asparagine 175, asparagine 202, asparagine 248, asparagine 283, asparagine 317, and asparagine 346. Ig-like C2-type domains are found at residues 147-259 (PEMG…FTFT) and 268-369 (PHLT…LSVI). Residues cysteine 166 and cysteine 242 are joined by a disulfide bond. Cysteine 288 and cysteine 353 are joined by a disulfide. A helical transmembrane segment spans residues 384–404 (IFLVIGFFVAIILLSLIIYCF). The Cytoplasmic portion of the chain corresponds to 405 to 854 (FLQYKNAVDS…SDYLEPKCLV (450 aa)). The region spanning 551-822 (KITNKKLGEG…EIVEILIDII (272 aa)) is the Protein kinase domain. Residues 557–565 (LGEGAFGMV) and lysine 585 contribute to the ATP site. The Proton acceptor role is filled by aspartate 689. Tyrosine 718 carries the phosphotyrosine; by autocatalysis modification.

This sequence belongs to the protein kinase superfamily. Tyr protein kinase family. Fibroblast growth factor receptor subfamily. As to expression, expressed in brain, stem cells and the mesenchymal cells.

The protein resides in the membrane. It catalyses the reaction L-tyrosyl-[protein] + ATP = O-phospho-L-tyrosyl-[protein] + ADP + H(+). In terms of biological role, receptor for basic fibroblast growth factor. This chain is Fibroblast growth factor receptor 1 (FGFR1), found in Dugesia japonica (Planarian).